The following is a 70-amino-acid chain: Dermaseptin-PH (70 aa).

Positions 1–22 are cleaved as a signal peptide; sequence MDILKKSLFLILFLGVVSLSIC. The propeptide occupies 23-44; sequence EEEKRENEEEMEQDDEQSEMKR. Glutamine 67 carries the glutamine amide modification. Residues 68–70 constitute a propeptide that is removed on maturation; that stretch reads GGQ.

The protein belongs to the frog skin active peptide (FSAP) family. As to expression, expressed by the skin glands.

It is found in the secreted. It localises to the target cell membrane. Antimicrobial peptide which inhibits the growth of Gram-negative (MIC=16-64 uM) and Gram-positive bacteria (MIC=32 uM), and pathogenic yeast Candida albicans (MIC=16 uM). Shows a broad-spectrum of anticancer activities against several cancer cell lines. Also shows slight cytotoxicity on human dermal microvascular endothelium cells (IC(50)=4.85 uM). Induces low hemolysis against horse erythrocytes. The polypeptide is Dermaseptin-PH (Pithecopus hypochondrialis (Orange-legged leaf frog)).